The following is a 1269-amino-acid chain: Phospholipase D A (1269 aa).

A compositionally biased stretch (polar residues) spans 55-64; it reads YTSVGSAPTT. The segment at 55–121 is disordered; sequence YTSVGSAPTT…NNNLQSPTQS (67 aa). Composition is skewed to low complexity over residues 65 to 87 and 95 to 114; these read NNNS…SGSS and NSNK…NNNN. Residues 131 to 192 are a coiled coil; sequence SKALHDFEEK…ELKSLDELLH (62 aa). Positions 222 to 232 are enriched in polar residues; the sequence is NSVTNNTPSSA. 2 disordered regions span residues 222–269 and 300–320; these read NSVT…SSST and NSYP…DPNL. Residues 233-269 show a composition bias toward low complexity; the sequence is TPLTLSNNNNYTSSSLATSPTTNSSSSSSSSSSSSST. PLD phosphodiesterase domains lie at 435–462 and 704–731; these read IYWS…CFGR and EQIY…NDRS. Catalysis depends on residues histidine 440, lysine 442, aspartate 447, histidine 709, lysine 711, and aspartate 716. A coiled-coil region spans residues 803–835; the sequence is NNNNNSNINNNINNNNNEINNNNNNNNNNNSNE. 3 stretches are compositionally biased toward low complexity: residues 810–850, 859–906, and 934–943; these read INNN…NSNS, NLPP…GTTN, and SSPQDSPQDS. Disordered stretches follow at residues 810-966 and 983-1007; these read INNN…HQSP and SNEQ…TTTD. Residues 987 to 1003 show a composition bias toward pro residues; that stretch reads LPPPPSSTTPPPPPPPL. The stretch at 1059–1096 forms a coiled coil; the sequence is TTAQQQQQQQQQQQQQQQQQQQQQQQQQQQQQQQQQQQ. A disordered region spans residues 1116-1167; it reads IKKKRSSISPSTSSNKLLLSGNGSGDSIRVVTDSGSSPRGQPRSMSSLHDHA. Over residues 1122–1142 the composition is skewed to low complexity; it reads SISPSTSSNKLLLSGNGSGDS. The segment covering 1148 to 1162 has biased composition (polar residues); sequence DSGSSPRGQPRSMSS.

It belongs to the phospholipase D family.

The enzyme catalyses a 1,2-diacyl-sn-glycero-3-phosphocholine + H2O = a 1,2-diacyl-sn-glycero-3-phosphate + choline + H(+). Its activity is regulated as follows. Inhibited by butan-1-ol. Its function is as follows. Plays a role in cell growth. Hydrolyzes membrane phospholipids, such as PtdCho free headgroup and PtdOH (phosphatidic acid; signaling molecule on its own). Involved in the inhibition of actin-based motility and endocytosis. Its inhibition causes complete collapse of F-actin organization. The chain is Phospholipase D A (pldA) from Dictyostelium discoideum (Social amoeba).